The following is a 650-amino-acid chain: FAS-associated factor 1 (650 aa).

One can recognise a UBA domain in the interval Met1–Gly57. The interval Pro62–Val87 is disordered. The span at Pro68–Ala83 shows a compositional bias: low complexity. At Ser320 the chain carries Phosphoserine. The 78-residue stretch at Asn569 to Leu646 folds into the UBX domain. Thr580 bears the Phosphothreonine mark. Position 582 is a phosphoserine (Ser582).

As to quaternary structure, interacts with CDT1 and ATPase VCP/p97. Interacts (via UBA domain) with FAS (via death domain). Interacts (via UBA domain) with NLRP12 (via DAPIN/PYRIN domain). As to expression, most abundant in testis, slightly less abundant in skeletal muscle and heart, followed by prostate, thymus, ovary, small intestine, and colon. Not detected in the peripheral blood leukocytes.

The protein resides in the nucleus. Its function is as follows. Ubiquitin-binding protein. Required for the progression of DNA replication forks by targeting DNA replication licensing factor CDT1 for degradation. Potentiates but cannot initiate FAS-induced apoptosis. This chain is FAS-associated factor 1 (FAF1), found in Homo sapiens (Human).